A 621-amino-acid chain; its full sequence is Glutathione-regulated potassium-efflux system protein KefC (621 aa).

12 helical membrane-spanning segments follow: residues 9-29 (ALIY…LGLG), 30-50 (SVLG…RLVN), 54-74 (AILH…GLEL), 90-110 (GALQ…LLGL), 114-134 (VAEL…MQAM), 149-169 (FAVL…IPLL), 178-198 (LMAF…VVVL), 232-252 (LLLE…GVLL), 270-290 (GLLL…APWS), 296-316 (IVIL…LIAQ), 326-346 (RWFA…FGPA), and 359-379 (ALTL…VLLT). Positions 399-518 (QPRVIVAGFG…AGVEAPERET (120 aa)) constitute an RCK N-terminal domain. The tract at residues 598-621 (GWQGTEEGRHTGDIADEPENKPSA) is disordered.

The protein belongs to the monovalent cation:proton antiporter 2 (CPA2) transporter (TC 2.A.37) family. KefC subfamily. In terms of assembly, homodimer. Interacts with the regulatory subunit KefF.

It localises to the cell inner membrane. Functionally, pore-forming subunit of a potassium efflux system that confers protection against electrophiles. Catalyzes K(+)/H(+) antiport. The protein is Glutathione-regulated potassium-efflux system protein KefC of Klebsiella aerogenes (Enterobacter aerogenes).